The following is a 3902-amino-acid chain: Mediator of RNA polymerase II transcription subunit 12 (3902 aa).

Disordered stretches follow at residues 414–576, 619–674, 694–940, 977–1029, 1812–1831, 2463–2675, 2719–2771, 2876–3151, 3195–3549, and 3563–3902; these read ESLT…EELP, FEPF…NPKL, AFDP…LEAL, VVEK…PEPP, TSHKTKDVKRKSANKTTETR, TVEP…NRKQ, AGAS…SSSM, RIME…PEMQ, LQAG…SSNQ, and AGLN…QQQY. Over residues 420 to 430 the composition is skewed to acidic residues; sequence EPEEDPEEGPE. The segment covering 709 to 721 has biased composition (pro residues); it reads PTPPEAPPPPPPV. 4 stretches are compositionally biased toward basic and acidic residues: residues 740-802, 912-928, 977-1004, and 1018-1027; these read EDGK…EHLN, KAGDDASKKTKEGKKPD, VVEKDKDKTPEKATEGEKEAEKDAEKLP, and KTPEKPKTPE. A compositionally biased stretch (basic residues) spans 1812–1824; that stretch reads TSHKTKDVKRKSA. The tract at residues 2409-3902 is required for nuclear localization; sequence QTTRLDKVAK…MGQFPNQQQY (1494 aa). Positions 2474-2547 are enriched in basic and acidic residues; sequence AAVKKPEEET…VTAKDTEKDT (74 aa). Residues 2480–2526 adopt a coiled-coil conformation; the sequence is EEETAEKKKDEAKKADEKTTKADDEKKKDETADAKKDNEKQKEEKDK. 3 stretches are compositionally biased toward low complexity: residues 2548–2566, 2614–2632, and 2734–2748; these read AAPTDAAKAAAAPVAAAPD, SRANANAETAAAAETSSTT, and PHPGMQHQSGMQHQG. Residues 2876–2979 are compositionally biased toward basic and acidic residues; it reads RIMEEQRILR…ERLERERVAR (104 aa). 4 stretches are compositionally biased toward low complexity: residues 2980 to 3001, 3010 to 3143, 3196 to 3205, and 3226 to 3236; these read EALAAQQAQQAQQAQQAQQAQQ, QQQR…QRNP, QAGQAAGQQQ, and PQQQQQQPQQP. A compositionally biased stretch (polar residues) spans 3237-3248; that stretch reads GTSQIPNTTPTR. 3 stretches are compositionally biased toward low complexity: residues 3250-3275, 3284-3295, and 3317-3389; these read ANPMQGQQQQAGMQNYQNQPVLGQPG, GQQQQNQFQRQG, and GQQQ…FGRQ. Positions 3391–3409 are enriched in polar residues; it reads APNQENFQQQPGFNQNAAG. Composition is skewed to low complexity over residues 3410–3446, 3454–3539, and 3570–3619; these read QNYQRPEQQQQSQNQWNQLNQQMRPQQPQQPSQQQQN, QSQQ…QGNQ, and SSGN…RPGM. Residues 3620 to 3649 are compositionally biased toward gly residues; the sequence is GQQGMGQQGMGQQGGMGQSGRGQPGMGGQS. 3 stretches are compositionally biased toward low complexity: residues 3663–3700, 3710–3742, and 3760–3830; these read MGQPGMQQSGMQQQHGMQQQQPGAQQSGLQQAGMQQQH, QQGRNNYGSMGQQGQQSGQQQAQQHQQMSQQAQ, and QQQQ…HRGQ. Positions 3831 to 3841 are enriched in gly residues; it reads GQQGHGMGGAG. The span at 3842 to 3888 shows a compositional bias: low complexity; the sequence is QQHQQVPQQQQNQYFQPQQQQDQRMQQQPGGQQQQQQGQSGQQQNNQ. Positions 3889-3902 are enriched in polar residues; sequence HYNNMGQFPNQQQY.

It belongs to the Mediator complex subunit 12 family. As to quaternary structure, component of the Mediator complex.

The protein resides in the nucleus. Its function is as follows. Component of the Mediator complex, a coactivator involved in regulated gene transcription of nearly all RNA polymerase II-dependent genes. Mediator functions as a bridge to convey information from gene-specific regulatory proteins to the basal RNA polymerase II transcription machinery. Mediator is recruited to promoters by direct interactions with regulatory proteins and serves as a scaffold for the assembly of a functional preinitiation complex with RNA polymerase II and the general transcription factors. This Caenorhabditis briggsae protein is Mediator of RNA polymerase II transcription subunit 12 (dpy-22).